A 591-amino-acid polypeptide reads, in one-letter code: DEAD-box ATP-dependent RNA helicase 30 (591 aa).

The interval 1–109 (MSSYDRRFAD…GRGGSSKREL (109 aa)) is disordered. Gly residues predominate over residues 72 to 103 (FSVGRGGGRGGYGQYGDRNGGGNWGGGGGRGG). Positions 165–193 (KMFQDANFPDNILEAIAKLGFTEPTPIQA) match the Q motif motif. The Helicase ATP-binding domain occupies 196–371 (WPMALKGRDL…RQFLRDPYKA (176 aa)). Residue 209–216 (AETGSGKT) participates in ATP binding. Positions 319 to 322 (DEAD) match the DEAD box motif. In terms of domain architecture, Helicase C-terminal spans 399 to 544 (RLLTLLKQLM…VVPPTLSALV (146 aa)). Positions 547-591 (SGSGYGGSGGGRNFRPRGGGRGGGFGDKRSRSTSNFVPHGGKRTW) are disordered. Over residues 549 to 571 (SGYGGSGGGRNFRPRGGGRGGGF) the composition is skewed to gly residues.

Belongs to the DEAD box helicase family. DDX5/DBP2 subfamily.

Its subcellular location is the nucleus. It carries out the reaction ATP + H2O = ADP + phosphate + H(+). Functionally, ATP-dependent RNA helicase involved nonsense-mediated mRNA decay and ribosome biogenesis through rRNA processing. In Arabidopsis thaliana (Mouse-ear cress), this protein is DEAD-box ATP-dependent RNA helicase 30 (RH30).